Here is a 623-residue protein sequence, read N- to C-terminus: DNA-directed RNA polymerase subunit beta' (623 aa).

4 residues coordinate Zn(2+): C70, C72, C85, and C88. Mg(2+) is bound by residues D466, D468, and D470.

It belongs to the RNA polymerase beta' chain family. RpoC1 subfamily. In plastids the minimal PEP RNA polymerase catalytic core is composed of four subunits: alpha, beta, beta', and beta''. When a (nuclear-encoded) sigma factor is associated with the core the holoenzyme is formed, which can initiate transcription. It depends on Mg(2+) as a cofactor. Requires Zn(2+) as cofactor.

The protein resides in the plastid. It is found in the chloroplast. It catalyses the reaction RNA(n) + a ribonucleoside 5'-triphosphate = RNA(n+1) + diphosphate. In terms of biological role, DNA-dependent RNA polymerase catalyzes the transcription of DNA into RNA using the four ribonucleoside triphosphates as substrates. In Guillardia theta (Cryptophyte), this protein is DNA-directed RNA polymerase subunit beta'.